A 218-amino-acid polypeptide reads, in one-letter code: Thiopurine S-methyltransferase (218 aa).

4 residues coordinate S-adenosyl-L-methionine: Trp-10, Leu-45, Glu-66, and Arg-123.

The protein belongs to the class I-like SAM-binding methyltransferase superfamily. TPMT family.

It localises to the cytoplasm. It catalyses the reaction S-adenosyl-L-methionine + a thiopurine = S-adenosyl-L-homocysteine + a thiopurine S-methylether.. This Xanthomonas euvesicatoria pv. vesicatoria (strain 85-10) (Xanthomonas campestris pv. vesicatoria) protein is Thiopurine S-methyltransferase.